A 693-amino-acid polypeptide reads, in one-letter code: CREB-regulated transcription coactivator 2 (693 aa).

Polar residues predominate over residues 1 to 20 (MATSGANGPGSATASASNPR). A disordered region spans residues 1–30 (MATSGANGPGSATASASNPRKFSEKIALQK). Ala-2 carries the N-acetylalanine modification. Position 51 is an asymmetric dimethylarginine; by PRMT6 (Arg-51). Phosphoserine occurs at positions 70, 86, and 90. Asymmetric dimethylarginine; by PRMT6 is present on residues Arg-99, Arg-120, and Arg-123. Position 136 is a phosphoserine (Ser-136). Residues Arg-161 and Arg-168 each carry the asymmetric dimethylarginine; by PRMT6 modification. A Phosphothreonine modification is found at Thr-169. Ser-171 carries the phosphoserine; by AMPK, MARK2, SIK1 and SIK2 modification. Thr-192 bears the Phosphothreonine mark. A Glycyl lysine isopeptide (Lys-Gly) (interchain with G-Cter in SUMO2) cross-link involves residue Lys-234. The Nuclear export signal motif lies at 271-287 (TGGSLPDLTNLHFPPPL). Residue Ser-274 is modified to Phosphoserine; by MARK2. 2 disordered regions span residues 282–306 (HFPP…GGNS) and 328–554 (GYDA…MSDF). Ser-306, Ser-368, Ser-393, Ser-433, and Ser-456 each carry phosphoserine. 2 stretches are compositionally biased toward low complexity: residues 331–378 (APGL…SSLA) and 386–415 (SLGH…GAPS). Over residues 447-468 (SQQQLPKQFSPTMSPTLSSITQ) the composition is skewed to polar residues. A Phosphotyrosine modification is found at Tyr-488. Phosphoserine is present on residues Ser-489, Ser-490, and Ser-492. The span at 498 to 507 (QPHTPKSLQQ) shows a compositional bias: polar residues. At Thr-501 the chain carries Phosphothreonine. The segment covering 509 to 529 (GLPSQSCSVQSSGGQPPGRQS) has biased composition (low complexity). Phosphoserine occurs at positions 613, 623, and 624.

It belongs to the TORC family. Binds, as a tetramer, through its N-terminal region, with the bZIP domain of CREB1. 'Arg-314' in the bZIP domain of CREB1 is essential for this interaction. Interaction, via its C-terminal, with TAF4, enhances recruitment of TAF4 to CREB1. Interacts with SIK2. Interacts with 14-3-3 proteins, YWHAB and YWHAG. Interacts (probably when phosphorylated at Ser-171) with YWHAE. Interacts with calmodulin-dependent catalytic subunit PPP3CA/calcineurin A. Interaction with COP1 mediates nuclear export and degradation of CRTC2. In terms of assembly, (Microbial infection) Interaction with the human T-cell leukemia virus type 1 (HTLV-1) Tax protein is essential for optimal transcription activation by Tax. In terms of processing, phosphorylation/dephosphorylation states of Ser-171 are required for regulating transduction of CREB activity. CRTCs/TORCs are inactive when phosphorylated, and active when dephosphorylated at this site. This primary site of phosphorylation, is regulated by cAMP and calcium levels and is dependent on the phosphorylation of SIKs (SIK1 and SIK2) by LKB1. Following adenylyl cyclase activation, dephosphorylated at Ser-171 by PPP3CA/calcineurin A resulting in CRTC2 dissociation from 14-3-3 proteins and PPP3CA. Both insulin and AMPK increase this phosphorylation of CRTC2 while glucagon suppresses it. Phosphorylation at Ser-274 by MARK2 is induced under low glucose conditions and dephosphorylated in response to glucose influx. Phosphorylation at Ser-274 promotes interaction with 14-3-3 proteins and translocation to the cytoplasm. Post-translationally, asymmetric dimethylation of arginine resisues by PRMT6 enhances the association of CRTC2 with CREB on the promoters of gluconeogenic genes. In terms of tissue distribution, most abundantly expressed in the thymus. Present in both B and T-lymphocytes. Highly expressed in HEK293T cells and in insulinomas. High levels also in spleen, ovary, muscle and lung, with highest levels in muscle. Lower levels found in brain, colon, heart, kidney, prostate, small intestine and stomach. Weak expression in liver and pancreas.

The protein resides in the cytoplasm. It localises to the nucleus. Functionally, transcriptional coactivator for CREB1 which activates transcription through both consensus and variant cAMP response element (CRE) sites. Acts as a coactivator, in the SIK/TORC signaling pathway, being active when dephosphorylated and acts independently of CREB1 'Ser-133' phosphorylation. Enhances the interaction of CREB1 with TAF4. Regulates gluconeogenesis as a component of the LKB1/AMPK/TORC2 signaling pathway. Regulates the expression of specific genes such as the steroidogenic gene, StAR. Potent coactivator of PPARGC1A and inducer of mitochondrial biogenesis in muscle cells. Also coactivator for TAX activation of the human T-cell leukemia virus type 1 (HTLV-1) long terminal repeats (LTR). The polypeptide is CREB-regulated transcription coactivator 2 (CRTC2) (Homo sapiens (Human)).